We begin with the raw amino-acid sequence, 750 residues long: Photosystem I P700 chlorophyll a apoprotein A1 (750 aa).

8 helical membrane-spanning segments follow: residues 70–93 (VFSA…FHGA), 156–179 (LYCT…FHYH), 195–219 (LNHH…HVSL), 291–309 (IAHH…GHMY), 346–369 (WHAQ…HHMY), 385–411 (LSLF…IFMV), 433–455 (AIIS…LYIH), and 531–549 (FLVH…LILL). [4Fe-4S] cluster is bound by residues Cys-573 and Cys-582. The next 2 helical transmembrane spans lie at 589-610 (HVFL…HFSW) and 664-686 (LSAY…MFLF). His-675 contacts chlorophyll a'. Residues Met-683 and Tyr-691 each contribute to the chlorophyll a site. Phylloquinone is bound at residue Trp-692. The helical transmembrane segment at 724-744 (AVGVTHYLLGGIATTWAFFLA) threads the bilayer.

This sequence belongs to the PsaA/PsaB family. In terms of assembly, the PsaA/B heterodimer binds the P700 chlorophyll special pair and subsequent electron acceptors. PSI consists of a core antenna complex that captures photons, and an electron transfer chain that converts photonic excitation into a charge separation. The eukaryotic PSI reaction center is composed of at least 11 subunits. It depends on P700 is a chlorophyll a/chlorophyll a' dimer, A0 is one or more chlorophyll a, A1 is one or both phylloquinones and FX is a shared 4Fe-4S iron-sulfur center. as a cofactor.

The protein localises to the plastid. The protein resides in the chloroplast thylakoid membrane. The enzyme catalyses reduced [plastocyanin] + hnu + oxidized [2Fe-2S]-[ferredoxin] = oxidized [plastocyanin] + reduced [2Fe-2S]-[ferredoxin]. Functionally, psaA and PsaB bind P700, the primary electron donor of photosystem I (PSI), as well as the electron acceptors A0, A1 and FX. PSI is a plastocyanin-ferredoxin oxidoreductase, converting photonic excitation into a charge separation, which transfers an electron from the donor P700 chlorophyll pair to the spectroscopically characterized acceptors A0, A1, FX, FA and FB in turn. Oxidized P700 is reduced on the lumenal side of the thylakoid membrane by plastocyanin. The protein is Photosystem I P700 chlorophyll a apoprotein A1 of Coffea arabica (Arabian coffee).